The chain runs to 542 residues: Chaperonin GroEL (542 aa).

ATP is bound by residues 29–32 (TLGP), Lys-50, 86–90 (DGTTT), Gly-415, and Asp-495.

This sequence belongs to the chaperonin (HSP60) family. In terms of assembly, forms a cylinder of 14 subunits composed of two heptameric rings stacked back-to-back. Interacts with the co-chaperonin GroES.

It localises to the cytoplasm. It catalyses the reaction ATP + H2O + a folded polypeptide = ADP + phosphate + an unfolded polypeptide.. Its function is as follows. Together with its co-chaperonin GroES, plays an essential role in assisting protein folding. The GroEL-GroES system forms a nano-cage that allows encapsulation of the non-native substrate proteins and provides a physical environment optimized to promote and accelerate protein folding. The polypeptide is Chaperonin GroEL (Azobacteroides pseudotrichonymphae genomovar. CFP2).